The sequence spans 74 residues: Large ribosomal subunit protein uL29 (74 aa).

Belongs to the universal ribosomal protein uL29 family.

This Streptomyces coelicolor (strain ATCC BAA-471 / A3(2) / M145) protein is Large ribosomal subunit protein uL29 (rpmC).